Reading from the N-terminus, the 504-residue chain is Ribosomal protein uS12 methylthiotransferase RimO (504 aa).

The region spanning 21–131 is the MTTase N-terminal domain; it reads KRVGFISLGC…VMGHVRELLP (111 aa). Residues Cys30, Cys66, Cys95, Cys186, Cys190, and Cys193 each contribute to the [4Fe-4S] cluster site. Residues 172–408 enclose the Radical SAM core domain; that stretch reads LTPRHYAYVK…MEVAQRISTE (237 aa). One can recognise a TRAM domain in the interval 411–487; the sequence is SEKVGRVMDV…EYDLFGEVIE (77 aa).

Belongs to the methylthiotransferase family. RimO subfamily. The cofactor is [4Fe-4S] cluster.

It localises to the cytoplasm. The enzyme catalyses L-aspartate(89)-[ribosomal protein uS12]-hydrogen + (sulfur carrier)-SH + AH2 + 2 S-adenosyl-L-methionine = 3-methylsulfanyl-L-aspartate(89)-[ribosomal protein uS12]-hydrogen + (sulfur carrier)-H + 5'-deoxyadenosine + L-methionine + A + S-adenosyl-L-homocysteine + 2 H(+). Catalyzes the methylthiolation of an aspartic acid residue of ribosomal protein uS12. In Deinococcus radiodurans (strain ATCC 13939 / DSM 20539 / JCM 16871 / CCUG 27074 / LMG 4051 / NBRC 15346 / NCIMB 9279 / VKM B-1422 / R1), this protein is Ribosomal protein uS12 methylthiotransferase RimO.